Consider the following 235-residue polypeptide: Phosphoribosylaminoimidazole-succinocarboxamide synthase (235 aa).

It belongs to the SAICAR synthetase family.

It carries out the reaction 5-amino-1-(5-phospho-D-ribosyl)imidazole-4-carboxylate + L-aspartate + ATP = (2S)-2-[5-amino-1-(5-phospho-beta-D-ribosyl)imidazole-4-carboxamido]succinate + ADP + phosphate + 2 H(+). It participates in purine metabolism; IMP biosynthesis via de novo pathway; 5-amino-1-(5-phospho-D-ribosyl)imidazole-4-carboxamide from 5-amino-1-(5-phospho-D-ribosyl)imidazole-4-carboxylate: step 1/2. The chain is Phosphoribosylaminoimidazole-succinocarboxamide synthase from Clostridium novyi (strain NT).